Reading from the N-terminus, the 345-residue chain is 3-isopropylmalate dehydrogenase (345 aa).

Substrate-binding residues include R94, R104, R132, and D216. The Mg(2+) site is built by D216, D240, and D244. 274–286 (GSAPDIAGQGIAN) serves as a coordination point for NAD(+).

It belongs to the isocitrate and isopropylmalate dehydrogenases family. LeuB type 1 subfamily. In terms of assembly, homodimer. It depends on Mg(2+) as a cofactor. Mn(2+) is required as a cofactor.

It is found in the cytoplasm. The enzyme catalyses (2R,3S)-3-isopropylmalate + NAD(+) = 4-methyl-2-oxopentanoate + CO2 + NADH. The protein operates within amino-acid biosynthesis; L-leucine biosynthesis; L-leucine from 3-methyl-2-oxobutanoate: step 3/4. In terms of biological role, catalyzes the oxidation of 3-carboxy-2-hydroxy-4-methylpentanoate (3-isopropylmalate) to 3-carboxy-4-methyl-2-oxopentanoate. The product decarboxylates to 4-methyl-2 oxopentanoate. The chain is 3-isopropylmalate dehydrogenase from Streptococcus pneumoniae (strain ATCC BAA-255 / R6).